Here is a 290-residue protein sequence, read N- to C-terminus: MPSSREIKRRIRSVKNVAQITRAMEMVSASKMRRAQRNVLATRPYADRMREVMANLTARVVGAARRGTLLEKRETVKSVALLVVTPDRGLCGSLVANVLRRAGRFITEQRAMGRTVDVYTFGRKGRDFFLRTGFAPAGEATRLGDAPKLEAILGVAISAINGFQSGKYDELYIIYSEFINTLVQRPAIKQLLPVESPDISTTTNVDYTYEPGEEEVLNSILPRYVETQIYQAVLESIASEHSARMVAMRNATNNAKDLVRDLTLSFNKARQAAITKEVSEIASGAAALTS.

This sequence belongs to the ATPase gamma chain family. In terms of assembly, F-type ATPases have 2 components, CF(1) - the catalytic core - and CF(0) - the membrane proton channel. CF(1) has five subunits: alpha(3), beta(3), gamma(1), delta(1), epsilon(1). CF(0) has three main subunits: a, b and c.

The protein resides in the cell membrane. Its function is as follows. Produces ATP from ADP in the presence of a proton gradient across the membrane. The gamma chain is believed to be important in regulating ATPase activity and the flow of protons through the CF(0) complex. In Chloroflexus aurantiacus (strain ATCC 29366 / DSM 635 / J-10-fl), this protein is ATP synthase gamma chain.